The following is a 498-amino-acid chain: Protein MGF 505-5R (498 aa).

This sequence belongs to the asfivirus MGF 505 family.

Its function is as follows. Plays a role in virus cell tropism, and may be required for efficient virus replication in macrophages. In Ornithodoros (relapsing fever ticks), this protein is Protein MGF 505-5R.